Consider the following 388-residue polypeptide: Succinate--CoA ligase [ADP-forming] subunit beta (388 aa).

One can recognise an ATP-grasp domain in the interval 9-245; sequence KELLAKYGLP…KSQENERELK (237 aa). Residues K46, 53–55, E100, Y103, and E108 each bind ATP; that span reads GRG. N200 and D214 together coordinate Mg(2+). Substrate-binding positions include N265 and 322–324; that span reads GIV.

It belongs to the succinate/malate CoA ligase beta subunit family. In terms of assembly, heterotetramer of two alpha and two beta subunits. The cofactor is Mg(2+).

It carries out the reaction succinate + ATP + CoA = succinyl-CoA + ADP + phosphate. The enzyme catalyses GTP + succinate + CoA = succinyl-CoA + GDP + phosphate. The protein operates within carbohydrate metabolism; tricarboxylic acid cycle; succinate from succinyl-CoA (ligase route): step 1/1. Succinyl-CoA synthetase functions in the citric acid cycle (TCA), coupling the hydrolysis of succinyl-CoA to the synthesis of either ATP or GTP and thus represents the only step of substrate-level phosphorylation in the TCA. The beta subunit provides nucleotide specificity of the enzyme and binds the substrate succinate, while the binding sites for coenzyme A and phosphate are found in the alpha subunit. The sequence is that of Succinate--CoA ligase [ADP-forming] subunit beta from Laribacter hongkongensis (strain HLHK9).